We begin with the raw amino-acid sequence, 64 residues long: Disintegrin (64 aa).

In terms of domain architecture, Disintegrin spans N1 to H64. Intrachain disulfides connect C6–C29, C20–C26, C25–C50, and C38–C57. A Cell attachment site; atypical (MLD) motif is present at residues M42 to D44.

This sequence belongs to the disintegrin family. Dimeric disintegrin subfamily. As to quaternary structure, heterodimer; disulfide-linked. In terms of tissue distribution, expressed by the venom gland.

It is found in the secreted. Inhibits adhesion of cells expressing alpha-4/beta-1 (ITGA4/ITGB1) and alpha-4/beta-7 (ITGA4/ITGB7) integrins to the natural ligands vascular cell adhesion molecule 1 (VCAM-1) and mucosal addressin cell adhesion molecule 1 (MADCAM-1). The chain is Disintegrin from Echis carinatus (Saw-scaled viper).